A 657-amino-acid chain; its full sequence is Probable intron-encoded endonuclease aI2 (657 aa).

Residues 1–245 (MKQMSYVTRW…TYEHLFWFFG (245 aa)) are COX1 exons 1 to 2 encoded. 6 consecutive transmembrane segments (helical) span residues 19-39 (IGMT…GMSV), 69-89 (LLMM…NFFL), 103-123 (LNNI…CSVL), 152-172 (AMFA…NFMV), 188-208 (PLFA…LPVL), and 269-289 (MYFI…ANMV). The segment at 246–657 (QWWPTNYVNN…KFENKWNKKF (412 aa)) is COX1 intron 2 encoded.

It in the C-terminal section; belongs to the LAGLIDADG endonuclease family. The protein in the N-terminal section; belongs to the heme-copper respiratory oxidase family. Post-translationally, the mature protein may arise from proteolytic cleavage of an in-frame translation of COX1 exons 1 and 2 plus intron 2, containing the aI2 open reading frame.

The protein localises to the mitochondrion. It localises to the membrane. In terms of biological role, mitochondrial DNA endonuclease involved in intron homing. The sequence is that of Probable intron-encoded endonuclease aI2 (aI2) from Debaryomyces hansenii (strain ATCC 36239 / CBS 767 / BCRC 21394 / JCM 1990 / NBRC 0083 / IGC 2968) (Yeast).